The following is a 308-amino-acid chain: Methionyl-tRNA formyltransferase (308 aa).

Residue S107–P110 coordinates (6S)-5,6,7,8-tetrahydrofolate.

The protein belongs to the Fmt family.

It carries out the reaction L-methionyl-tRNA(fMet) + (6R)-10-formyltetrahydrofolate = N-formyl-L-methionyl-tRNA(fMet) + (6S)-5,6,7,8-tetrahydrofolate + H(+). Attaches a formyl group to the free amino group of methionyl-tRNA(fMet). The formyl group appears to play a dual role in the initiator identity of N-formylmethionyl-tRNA by promoting its recognition by IF2 and preventing the misappropriation of this tRNA by the elongation apparatus. The chain is Methionyl-tRNA formyltransferase from Carboxydothermus hydrogenoformans (strain ATCC BAA-161 / DSM 6008 / Z-2901).